The chain runs to 378 residues: Palmitoyltransferase PFA4 (378 aa).

The Cytoplasmic portion of the chain corresponds to 1–9; it reads MPVKLRWPW. A helical membrane pass occupies residues 10 to 30; sequence LGIAIPTFLISFIGYGAHYFI. At 31 to 40 the chain is on the lumenal side; it reads LSNFLSVPKQ. A helical transmembrane segment spans residues 41-61; that stretch reads ITFEFCLSMIWLSYYLAICTN. Residues 62–119 are Cytoplasmic-facing; that stretch reads PGRPLPNYKPPPDIWRNFCKKCQSYKPERSHHCKTCNQCVLMMDHHCPWTMNCVGFAN. A DHHC domain is found at 78 to 128; the sequence is NFCKKCQSYKPERSHHCKTCNQCVLMMDHHCPWTMNCVGFANYPHFLRFLF. Cys108 serves as the catalytic S-palmitoyl cysteine intermediate. The chain crosses the membrane as a helical span at residues 120–140; the sequence is YPHFLRFLFWIIVTTSVLFCI. The Lumenal segment spans residues 141–164; that stretch reads QAKRIYFIWQQRHLPGYFFKKSEL. Residues 165–185 form a helical membrane-spanning segment; that stretch reads IFLTISSPLNSFVLLTITILF. The Cytoplasmic segment spans residues 186–378; the sequence is LRCLFNQILN…DDFGVDVDME (193 aa).

The protein belongs to the DHHC palmitoyltransferase family. PFA4 subfamily. Post-translationally, autopalmitoylated.

It localises to the endoplasmic reticulum membrane. It carries out the reaction L-cysteinyl-[protein] + hexadecanoyl-CoA = S-hexadecanoyl-L-cysteinyl-[protein] + CoA. Its function is as follows. Mediates the reversible addition of palmitate to target proteins, thereby regulating their membrane association and biological function. Palmitoylates several amino acid permeases. Palmitoylates chitin synthase CHS3, which is required for its proper export from the ER. Can palmitoylate RAS2 in vitro. The protein is Palmitoyltransferase PFA4 of Saccharomyces cerevisiae (strain ATCC 204508 / S288c) (Baker's yeast).